Reading from the N-terminus, the 290-residue chain is 33 kDa chaperonin (290 aa).

Disulfide bonds link cysteine 235/cysteine 237 and cysteine 268/cysteine 271.

Belongs to the HSP33 family. Under oxidizing conditions two disulfide bonds are formed involving the reactive cysteines. Under reducing conditions zinc is bound to the reactive cysteines and the protein is inactive.

It is found in the cytoplasm. In terms of biological role, redox regulated molecular chaperone. Protects both thermally unfolding and oxidatively damaged proteins from irreversible aggregation. Plays an important role in the bacterial defense system toward oxidative stress. The sequence is that of 33 kDa chaperonin from Streptococcus pyogenes serotype M18 (strain MGAS8232).